We begin with the raw amino-acid sequence, 73 residues long: UPF0352 protein APJL_0577 (73 aa).

Belongs to the UPF0352 family.

The sequence is that of UPF0352 protein APJL_0577 from Actinobacillus pleuropneumoniae serotype 3 (strain JL03).